We begin with the raw amino-acid sequence, 337 residues long: CMRF35-like molecule 1 (337 aa).

Positions 1–19 (MHLSLLVPFLFWITGCCTA) are cleaved as a signal peptide. Residues 20-125 (EDPVTGPEEV…LDPMFKVTVN (106 aa)) enclose the Ig-like V-type domain. Residues 20–193 (EDPVTGPEEV…GVGDGFLDLS (174 aa)) lie on the Extracellular side of the membrane. Residues 39–45 (VQCRYTS) are plays an important role in murine norovirus (MNV) binding. 2 disulfides stabilise this stretch: C41–C109 and C55–C63. The chain crosses the membrane as a helical span at residues 194–214 (VLLPVISAVLLLLLLVASLFA). Topologically, residues 215–337 (WRMVRRQKKA…IRRPLPAAMP (123 aa)) are cytoplasmic. Disordered stretches follow at residues 248 to 270 (QPRT…GKDH) and 318 to 337 (LEEE…AAMP). Residues 252–266 (SPGSSWKKGSSMSSS) show a composition bias toward low complexity.

It belongs to the CD300 family. In terms of assembly, interacts with PTPN6/SHP-1 in a tyrosine phosphorylation dependent manner. Interacts with IL4R. In terms of processing, phosphorylated on tyrosine. Expressed in myeloid cells. Present on the surface of macrophages (at protein level). Highly expressed by alveolar, splenic macrophages and bone marrow-derived dendritic cells. Expression is increased following aeroallergen challenge in macrophages, mast cells, and eosinophils.

The protein localises to the cell membrane. Functionally, acts as an inhibitory receptor for myeloid cells and mast cells. Positively regulates the phagocytosis of apoptotic cells (efferocytosis) via phosphatidylserine (PS) recognition; recognizes and binds PS as a ligand which is expressed on the surface of apoptotic cells. Plays an important role in the maintenance of immune homeostasis, by promoting macrophage-mediated efferocytosis and by inhibiting dendritic cell-mediated efferocytosis. Negatively regulates Fc epsilon receptor-dependent mast cell activation and allergic responses via binding to ceramide which acts as a ligand. May act as a coreceptor for interleukin 4 (IL-4). Associates with and regulates IL-4 receptor alpha-mediated responses by augmenting IL-4- and IL-13-induced signaling. Negatively regulates the Toll-like receptor (TLR) signaling mediated by MYD88 and TRIF through activation of PTPN6/SHP-1 and PTPN11/SHP-2. Inhibits osteoclast formation. Induces macrophage cell death upon engagement. Its function is as follows. (Microbial infection) Acts as a functional receptor for murine norovirus (MNV). Mediates binding to the cell surface and is both necessary and sufficient for viral entry and replication. This interaction requires Mg(2+) and Ca(2+) and is enhanced by bile acids. Primary determinant of MNV species tropism and is sufficient to render cells permissive to infection by MNV. Can render nonmurine mammalian cells susceptible to MNV infection. In Mus musculus (Mouse), this protein is CMRF35-like molecule 1 (Cd300lf).